The primary structure comprises 92 residues: uncharacterized protein (92 aa).

Helical transmembrane passes span 1-21 (MEVL…GVIL), 29-49 (IIML…CYYL), and 51-71 (IAIV…LGYL).

It is found in the cell membrane. This is an uncharacterized protein from Methanocaldococcus jannaschii (strain ATCC 43067 / DSM 2661 / JAL-1 / JCM 10045 / NBRC 100440) (Methanococcus jannaschii).